A 190-amino-acid polypeptide reads, in one-letter code: GTP cyclohydrolase 1 (190 aa).

Residues C75, H78, and C146 each coordinate Zn(2+).

This sequence belongs to the GTP cyclohydrolase I family. As to quaternary structure, homomer.

The catalysed reaction is GTP + H2O = 7,8-dihydroneopterin 3'-triphosphate + formate + H(+). It participates in cofactor biosynthesis; 7,8-dihydroneopterin triphosphate biosynthesis; 7,8-dihydroneopterin triphosphate from GTP: step 1/1. This is GTP cyclohydrolase 1 from Campylobacter jejuni subsp. jejuni serotype O:6 (strain 81116 / NCTC 11828).